The following is a 1381-amino-acid chain: Hepatocyte growth factor receptor (1381 aa).

Positions Met-1 to Gly-24 are cleaved as a signal peptide. The Extracellular portion of the chain corresponds to Glu-25–Thr-932. The Sema domain occupies Lys-27 to Leu-515. Asn-45 carries N-linked (GlcNAc...) asparagine glycosylation. 4 disulfides stabilise this stretch: Cys-95/Cys-101, Cys-98/Cys-160, Cys-133/Cys-141, and Cys-172/Cys-175. Asn-106 carries N-linked (GlcNAc...) asparagine glycosylation. N-linked (GlcNAc...) asparagine glycosylation is present at Asn-149. Asn-202 carries an N-linked (GlcNAc...) asparagine glycan. Disulfide bonds link Cys-298/Cys-363 and Cys-385/Cys-397. Residue Asn-399 is glycosylated (N-linked (GlcNAc...) asparagine). Cystine bridges form between Cys-520/Cys-538, Cys-526/Cys-561, Cys-529/Cys-545, and Cys-541/Cys-551. IPT/TIG domains follow at residues Pro-563 to Val-655, Pro-657 to Arg-739, and Pro-742 to Val-836. Thr-582 carries O-linked (Man) threonine glycosylation. Asn-607 and Asn-635 each carry an N-linked (GlcNAc...) asparagine glycan. Thr-676 and Thr-761 each carry an O-linked (Man) threonine glycan. N-linked (GlcNAc...) asparagine glycosylation is found at Asn-785, Asn-879, and Asn-930. A helical transmembrane segment spans residues Gly-933–Leu-955. At Lys-956–Thr-1381 the chain is on the cytoplasmic side. A Phosphoserine modification is found at Ser-966. Thr-977 bears the Phosphothreonine mark. Phosphoserine occurs at positions 990, 997, and 1000. Position 1003 is a phosphotyrosine (Tyr-1003). Residues Val-1078 to Ile-1345 enclose the Protein kinase domain. Residues Ile-1084–Val-1092 and Lys-1110 contribute to the ATP site. The Proton acceptor role is filled by Asp-1204. The segment at Leu-1212–Thr-1381 is interaction with RANBP9. Tyr-1230 is modified (phosphotyrosine). 2 positions are modified to phosphotyrosine; by autocatalysis: Tyr-1234 and Tyr-1235. A Phosphothreonine modification is found at Thr-1289. The tract at residues Trp-1320 to Val-1359 is interaction with MUC20. Residues Tyr-1349 and Tyr-1356 each carry the phosphotyrosine; by autocatalysis modification. Tyr-1365 is modified (phosphotyrosine).

The protein belongs to the protein kinase superfamily. Tyr protein kinase family. Heterodimer made of an alpha chain (50 kDa) and a beta chain (145 kDa) which are disulfide linked. Binds PLXNB1. Interacts when phosphorylated with downstream effectors including STAT3, PIK3R1, SRC, PCLG1, GRB2 and GAB1. Interacts with SPSB1, SPSB2 and SPSB4. Interacts with INPP5D/SHIP1. When phosphorylated at Tyr-1356, interacts with INPPL1/SHIP2. Interacts with RANBP9 and RANBP10, as well as SPSB1, SPSB2, SPSB3 and SPSB4. SPSB1 binding occurs in the presence and in the absence of HGF, however HGF treatment has a positive effect on this interaction. Interacts with MUC20; prevents interaction with GRB2 and suppresses hepatocyte growth factor-induced cell proliferation. Interacts with GRB10. Interacts with PTPN1 and PTPN2. Interacts with tensin TNS3. Interacts (when phosphorylated) with tensin TNS4 (via SH2 domain); the interaction increases MET protein stability by inhibiting MET endocytosis and subsequent lysosomal degradation. Autophosphorylated in response to ligand binding on Tyr-1234 and Tyr-1235 in the kinase domain leading to further phosphorylation of Tyr-1349 and Tyr-1356 in the C-terminal multifunctional docking site. Dephosphorylated by PTPRJ at Tyr-1349 and Tyr-1365. Dephosphorylated by PTPN1 and PTPN2. Post-translationally, ubiquitinated. Ubiquitination by CBL regulates the receptor stability and activity through proteasomal degradation. In terms of processing, O-mannosylation of IPT/TIG domains by TMEM260 is required for protein maturation. O-mannosylated residues are composed of single mannose glycans that are not elongated or modified.

The protein localises to the membrane. It carries out the reaction L-tyrosyl-[protein] + ATP = O-phospho-L-tyrosyl-[protein] + ADP + H(+). Its activity is regulated as follows. In its inactive state, the C-terminal tail interacts with the catalytic domain and inhibits the kinase activity. Upon ligand binding, the C-terminal tail is displaced and becomes phosphorylated, thus increasing the kinase activity. Receptor tyrosine kinase that transduces signals from the extracellular matrix into the cytoplasm by binding to hepatocyte growth factor/HGF ligand. Regulates many physiological processes including proliferation, scattering, morphogenesis and survival. Ligand binding at the cell surface induces autophosphorylation of MET on its intracellular domain that provides docking sites for downstream signaling molecules. Following activation by ligand, interacts with the PI3-kinase subunit PIK3R1, PLCG1, SRC, GRB2, STAT3 or the adapter GAB1. Recruitment of these downstream effectors by MET leads to the activation of several signaling cascades including the RAS-ERK, PI3 kinase-AKT, or PLCgamma-PKC. The RAS-ERK activation is associated with the morphogenetic effects while PI3K/AKT coordinates prosurvival effects. During embryonic development, MET signaling plays a role in gastrulation, development and migration of muscles and neuronal precursors, angiogenesis and kidney formation. In adults, participates in wound healing as well as organ regeneration and tissue remodeling. Also promotes differentiation and proliferation of hematopoietic cells. This Ateles geoffroyi (Black-handed spider monkey) protein is Hepatocyte growth factor receptor (MET).